Consider the following 278-residue polypeptide: Transmembrane protein 45B (278 aa).

7 helical membrane passes run 7–27, 49–69, 95–115, 117–137, 149–169, 183–203, and 215–235; these read HALP…KYPL, IIEG…EQFV, YLFF…FHIV, LGLD…LFYF, IHSL…LEVI, LLIL…PPFG, and IMFI…IVAI. Phosphoserine occurs at positions 273 and 275.

This sequence belongs to the TMEM45 family.

The protein resides in the endosome membrane. The protein localises to the lysosome membrane. It is found in the golgi apparatus. Its subcellular location is the trans-Golgi network membrane. In terms of biological role, plays a role in innate immunity. The protein is Transmembrane protein 45B (Tmem45b) of Mus musculus (Mouse).